The chain runs to 384 residues: tRNA 2-selenouridine synthase (384 aa).

Positions Phe15–Glu138 constitute a Rhodanese domain. Residue Cys98 is the S-selanylcysteine intermediate of the active site.

The protein belongs to the SelU family. As to quaternary structure, monomer.

The catalysed reaction is 5-methylaminomethyl-2-thiouridine(34) in tRNA + selenophosphate + (2E)-geranyl diphosphate + H2O + H(+) = 5-methylaminomethyl-2-selenouridine(34) in tRNA + (2E)-thiogeraniol + phosphate + diphosphate. It catalyses the reaction 5-methylaminomethyl-2-thiouridine(34) in tRNA + (2E)-geranyl diphosphate = 5-methylaminomethyl-S-(2E)-geranyl-thiouridine(34) in tRNA + diphosphate. The enzyme catalyses 5-methylaminomethyl-S-(2E)-geranyl-thiouridine(34) in tRNA + selenophosphate + H(+) = 5-methylaminomethyl-2-(Se-phospho)selenouridine(34) in tRNA + (2E)-thiogeraniol. It carries out the reaction 5-methylaminomethyl-2-(Se-phospho)selenouridine(34) in tRNA + H2O = 5-methylaminomethyl-2-selenouridine(34) in tRNA + phosphate. In terms of biological role, involved in the post-transcriptional modification of the uridine at the wobble position (U34) of tRNA(Lys), tRNA(Glu) and tRNA(Gln). Catalyzes the conversion of 2-thiouridine (S2U-RNA) to 2-selenouridine (Se2U-RNA). Acts in a two-step process involving geranylation of 2-thiouridine (S2U) to S-geranyl-2-thiouridine (geS2U) and subsequent selenation of the latter derivative to 2-selenouridine (Se2U) in the tRNA chain. This Shewanella sp. (strain MR-4) protein is tRNA 2-selenouridine synthase.